Here is a 224-residue protein sequence, read N- to C-terminus: MPFLFVSGTGTGVGKTFSTAVLVRYLADQGHDVLPVKLVQTGELPGEGDIFTIERLTGIAGEEFARFKDPLAPNLAARREGIEPIQFDQIISWLRGFDDPDRIIVVEGAGGLLVRLGEDFTLADVASALNAPLVIVTSTGLGSLNAAELSVEAANRRGLTVLGVLGGSIPQNPDLATMLNLEEFERVTGVPFWGALPEGLSRVEGFVEKQSFPALDAFKKPPAR.

12–17 is an ATP binding site; the sequence is GVGKTF. A Mg(2+)-binding site is contributed by Thr16. Residue Lys37 is part of the active site. Thr41 lines the substrate pocket. Glu107 is a binding site for Mg(2+). Residues 107-110, 167-168, 197-199, and Glu204 contribute to the ATP site; these read EGAG, GS, and PEG.

It belongs to the dethiobiotin synthetase family. As to quaternary structure, homodimer. Requires Mg(2+) as cofactor.

It is found in the cytoplasm. It catalyses the reaction (7R,8S)-7,8-diammoniononanoate + CO2 + ATP = (4R,5S)-dethiobiotin + ADP + phosphate + 3 H(+). Its pathway is cofactor biosynthesis; biotin biosynthesis; biotin from 7,8-diaminononanoate: step 1/2. In terms of biological role, catalyzes a mechanistically unusual reaction, the ATP-dependent insertion of CO2 between the N7 and N8 nitrogen atoms of 7,8-diaminopelargonic acid (DAPA, also called 7,8-diammoniononanoate) to form a ureido ring. The chain is ATP-dependent dethiobiotin synthetase BioD from Corynebacterium glutamicum (strain R).